Consider the following 677-residue polypeptide: Methionine--tRNA ligase (677 aa).

Residues 15 to 25 carry the 'HIGH' region motif; sequence PYANGSIHLGH. The Zn(2+) site is built by Cys146, Cys149, Cys159, and Cys162. Positions 333 to 337 match the 'KMSKS' region motif; sequence KMSKS. Lys336 provides a ligand contact to ATP. The tRNA-binding domain maps to 575 to 677; the sequence is DFAKVDLRVA…AGAKPGHQVK (103 aa).

This sequence belongs to the class-I aminoacyl-tRNA synthetase family. MetG type 1 subfamily. As to quaternary structure, homodimer. The cofactor is Zn(2+).

The protein resides in the cytoplasm. It catalyses the reaction tRNA(Met) + L-methionine + ATP = L-methionyl-tRNA(Met) + AMP + diphosphate. Functionally, is required not only for elongation of protein synthesis but also for the initiation of all mRNA translation through initiator tRNA(fMet) aminoacylation. This is Methionine--tRNA ligase from Shigella dysenteriae serotype 1 (strain Sd197).